The chain runs to 1553 residues: Sterol 3-beta-glucosyltransferase (1553 aa).

Composition is skewed to polar residues over residues M1 to G10 and L25 to A36. Disordered stretches follow at residues M1–D106 and P189–P270. The segment covering L90–E100 has biased composition (basic and acidic residues). Over residues L211–S222 the composition is skewed to low complexity. A compositionally biased stretch (basic residues) spans S223–Q232. 2 GRAM domains span residues K323–K370 and S464–Q495. The PH domain maps to E374–F470. Disordered stretches follow at residues S542–R569, F611–P662, and G805–D825. The span at L633–A650 shows a compositional bias: basic and acidic residues. The segment covering S651–P662 has biased composition (polar residues). The segment covering D810–R819 has biased composition (basic and acidic residues). Positions A834–K900 constitute a GRAM 3 domain. UDP-alpha-D-glucose-binding residues include S1020, R1021, D1023, A1328, H1330, H1343, S1346, G1347, T1348, D1367, and Q1368. 2 disordered regions span residues K1446–S1504 and P1527–V1553. The segment covering P1466 to S1488 has biased composition (acidic residues).

The protein belongs to the glycosyltransferase 28 family.

The protein localises to the cytoplasm. The protein resides in the preautophagosomal structure membrane. It carries out the reaction a sterol + UDP-alpha-D-glucose = a sterol 3-beta-D-glucoside + UDP + H(+). The enzyme catalyses ergosterol + UDP-alpha-D-glucose = ergosteryl 3-beta-D-glucoside + UDP + H(+). In terms of biological role, sterol glycosyltransferase responsible for the glycosylation of ergosterol to form ergosterol-glucoside. The protein is Sterol 3-beta-glucosyltransferase (apg-12) of Neurospora crassa (strain ATCC 24698 / 74-OR23-1A / CBS 708.71 / DSM 1257 / FGSC 987).